The chain runs to 70 residues: Protein SlyX homolog (70 aa).

This sequence belongs to the SlyX family.

The protein is Protein SlyX homolog of Shewanella piezotolerans (strain WP3 / JCM 13877).